A 308-amino-acid chain; its full sequence is SAP30-binding protein (308 aa).

The segment at 15-101 (AEDSEPESDG…EAEKRDPQEL (87 aa)) is disordered. Over residues 16 to 26 (EDSEPESDGEA) the composition is skewed to acidic residues. S18, S22, S43, and S52 each carry phosphoserine. Residues 57 to 78 (DEDGYEEEEDENSRQSEDDDSE) show a composition bias toward acidic residues. The segment covering 79 to 99 (TEKPEADDPKDNTEAEKRDPQ) has biased composition (basic and acidic residues). Residue K95 forms a Glycyl lysine isopeptide (Lys-Gly) (interchain with G-Cter in SUMO2) linkage. S113 carries the post-translational modification Phosphoserine. Residues K220, K304, and K305 each participate in a glycyl lysine isopeptide (Lys-Gly) (interchain with G-Cter in SUMO2) cross-link.

This sequence belongs to the HCNGP family. In terms of assembly, interacts with histone deacetylase complex subunit SAP30.

The protein resides in the nucleus. In terms of biological role, plays a role in transcriptional repression by promoting histone deacetylase activity, leading to deacetylation of histone H3. May be involved in the regulation of beta-2-microglobulin genes. Functionally, (Microbial infection) Involved in transcriptional repression of HHV-1 genes TK and gC. This is SAP30-binding protein from Homo sapiens (Human).